Here is a 306-residue protein sequence, read N- to C-terminus: UDP-3-O-acyl-N-acetylglucosamine deacetylase (306 aa).

Residues histidine 79, histidine 238, and aspartate 242 each contribute to the Zn(2+) site. Histidine 265 functions as the Proton donor in the catalytic mechanism.

Belongs to the LpxC family. Zn(2+) is required as a cofactor.

It catalyses the reaction a UDP-3-O-[(3R)-3-hydroxyacyl]-N-acetyl-alpha-D-glucosamine + H2O = a UDP-3-O-[(3R)-3-hydroxyacyl]-alpha-D-glucosamine + acetate. Its pathway is glycolipid biosynthesis; lipid IV(A) biosynthesis; lipid IV(A) from (3R)-3-hydroxytetradecanoyl-[acyl-carrier-protein] and UDP-N-acetyl-alpha-D-glucosamine: step 2/6. Catalyzes the hydrolysis of UDP-3-O-myristoyl-N-acetylglucosamine to form UDP-3-O-myristoylglucosamine and acetate, the committed step in lipid A biosynthesis. The chain is UDP-3-O-acyl-N-acetylglucosamine deacetylase from Shewanella sp. (strain W3-18-1).